We begin with the raw amino-acid sequence, 692 residues long: MGKAKNKKKVLKNKQQVLVPGILFVHPKKGFGFVSPDQPDLYPFDIFVPASDLKGALDGDHVLVALPFSQRGGEKRKGVIHKVLSRGKTVLVGTIISLISPTLAMVCVNAISPEVPLKAELLPKRTYKIGDRLLLKTPGWKENYPSKEPPPLAMLEFMGNISNAKTDFPVIKAEFSITEEFPEAVVQEASQFLQKHVTQALHSRKDLRDLLCFTIDSASAKDFDDAVSLTYDHEGNYILGVHIADVSHYVTPNSALDQEAAKRCNSIYFPGKVIPMLPSALSDNLCSLKPNVDRLAVSVFMTFSKEGFLSDYRILRSVIRSKYRMTYDEVDEIIEKKLAHPISKTILEMAELSRIFSDIREQRGCTRLVLPSFTMSLDNLQEPVALVENKQTAAHKLIEEFMLKANEVIAYHISHQGITMPFRIHEPPNEENLLLFRETAKAMGFTITQTPTQEPDYQYLLQETSAGHPLEPILHSQFVRSMKTASYSTENKGHYGLCLDYYTHFTSPIRRYVDLIVHRLLFHPLSVEEGHLEQIVRACSSQERVAAKAEGAFINIKKARFLKKFLDEQPATLYKAFIITVSPEGLSFVLPELCHEGFIPAAKLPKKYVIKTKLGLEELPEHLLPGIPISVQLASVTLLTQAIEWTLIESKERSSSKKKKAKAKSNATQVKKKSSSKKKKAVSKAKKNRGGK.

Positions 204–525 constitute an RNB domain; sequence RKDLRDLLCF…IVHRLLFHPL (322 aa). The region spanning 563–648 is the S1 motif domain; the sequence is KKFLDEQPAT…LTQAIEWTLI (86 aa). Residues 651–692 form a disordered region; sequence KERSSSKKKKAKAKSNATQVKKKSSSKKKKAVSKAKKNRGGK. Over residues 670-692 the composition is skewed to basic residues; the sequence is VKKKSSSKKKKAVSKAKKNRGGK.

Belongs to the RNR ribonuclease family. RNase R subfamily.

It is found in the cytoplasm. It catalyses the reaction Exonucleolytic cleavage in the 3'- to 5'-direction to yield nucleoside 5'-phosphates.. 3'-5' exoribonuclease that releases 5'-nucleoside monophosphates and is involved in maturation of structured RNAs. This is Ribonuclease R from Chlamydia muridarum (strain MoPn / Nigg).